Here is a 343-residue protein sequence, read N- to C-terminus: Holliday junction branch migration complex subunit RuvB (343 aa).

Positions 4-193 are large ATPase domain (RuvB-L); that stretch reads TDNLTAAQPQ…FGIVSRLEFY (190 aa). ATP-binding positions include Leu-32, Arg-33, Gly-74, Lys-77, Thr-78, Thr-79, 140–142, Arg-183, Tyr-193, and Arg-230; that span reads EDY. Thr-78 lines the Mg(2+) pocket. A small ATPAse domain (RuvB-S) region spans residues 194–264; the sequence is ENRDLTTIVS…VADAALSMLD (71 aa). Residues 267–343 form a head domain (RuvB-H) region; that stretch reads AQGLDVMDRK…YLHFGLPVEK (77 aa). DNA contacts are provided by Arg-322 and Arg-327.

This sequence belongs to the RuvB family. As to quaternary structure, homohexamer. Forms an RuvA(8)-RuvB(12)-Holliday junction (HJ) complex. HJ DNA is sandwiched between 2 RuvA tetramers; dsDNA enters through RuvA and exits via RuvB. An RuvB hexamer assembles on each DNA strand where it exits the tetramer. Each RuvB hexamer is contacted by two RuvA subunits (via domain III) on 2 adjacent RuvB subunits; this complex drives branch migration. In the full resolvosome a probable DNA-RuvA(4)-RuvB(12)-RuvC(2) complex forms which resolves the HJ.

The protein resides in the cytoplasm. It carries out the reaction ATP + H2O = ADP + phosphate + H(+). Functionally, the RuvA-RuvB-RuvC complex processes Holliday junction (HJ) DNA during genetic recombination and DNA repair, while the RuvA-RuvB complex plays an important role in the rescue of blocked DNA replication forks via replication fork reversal (RFR). RuvA specifically binds to HJ cruciform DNA, conferring on it an open structure. The RuvB hexamer acts as an ATP-dependent pump, pulling dsDNA into and through the RuvAB complex. RuvB forms 2 homohexamers on either side of HJ DNA bound by 1 or 2 RuvA tetramers; 4 subunits per hexamer contact DNA at a time. Coordinated motions by a converter formed by DNA-disengaged RuvB subunits stimulates ATP hydrolysis and nucleotide exchange. Immobilization of the converter enables RuvB to convert the ATP-contained energy into a lever motion, pulling 2 nucleotides of DNA out of the RuvA tetramer per ATP hydrolyzed, thus driving DNA branch migration. The RuvB motors rotate together with the DNA substrate, which together with the progressing nucleotide cycle form the mechanistic basis for DNA recombination by continuous HJ branch migration. Branch migration allows RuvC to scan DNA until it finds its consensus sequence, where it cleaves and resolves cruciform DNA. The sequence is that of Holliday junction branch migration complex subunit RuvB from Neisseria gonorrhoeae (strain NCCP11945).